The following is a 150-amino-acid chain: UPF0756 membrane protein PM0771 (150 aa).

Transmembrane regions (helical) follow at residues 12–34 (LVVL…AAIL), 52–72 (HGIT…IVSG), 79–99 (LAVF…LVAW), and 123–143 (ILGV…AGIL).

The protein belongs to the UPF0756 family.

It is found in the cell membrane. This chain is UPF0756 membrane protein PM0771, found in Pasteurella multocida (strain Pm70).